The primary structure comprises 177 residues: Large ribosomal subunit protein uL16 (177 aa).

This sequence belongs to the universal ribosomal protein uL16 family. As to quaternary structure, part of the 50S ribosomal subunit. Weakly binds 5S rRNA. Probably binds the A and P site tRNAs.

Its function is as follows. This is 1 of 5 proteins that mediate the attachment of the 5S rRNA onto the large ribosomal subunit, stabilizing the orientation of adjacent RNA domains. Modeling places the A and P site tRNAs in close proximity to this protein. The protein is Large ribosomal subunit protein uL16 of Haloarcula marismortui (strain ATCC 43049 / DSM 3752 / JCM 8966 / VKM B-1809) (Halobacterium marismortui).